Consider the following 1862-residue polypeptide: Chitin synthase V (1862 aa).

The disordered stretch occupies residues 1–26 (MAMSLPQLGGAGGPHTQPSLPSLPAH). The region spanning 1 to 778 (MAMSLPQLGG…CWMEIAQLGE (778 aa)) is the Myosin motor domain. N-linked (GlcNAc...) asparagine glycosylation occurs at N63. ATP is bound at residue 104-111 (GESGAGKS). 5 N-linked (GlcNAc...) asparagine glycosylation sites follow: N123, N429, N483, N522, and N560. A disordered region spans residues 592–643 (TVSSKPMRAPSVMSRKTHRTGRPSTAYKRQQQEAMEELDQQSQAGESKKNAK). Positions 658 to 682 (LDNVQKAVTDPGTNSYFVFCLKPND) are actin-binding. 2 helical membrane passes run 884–904 (WVAL…RLIG) and 923–943 (MLIW…PMLI). In terms of domain architecture, Cytochrome b5 heme-binding spans 947–1009 (QYVYSSNELS…YAGKDISALF (63 aa)). N1036, N1063, and N1192 each carry an N-linked (GlcNAc...) asparagine glycan. A helical transmembrane segment spans residues 1202-1222 (FILAISVMLASILVFKFLAAL). Residues N1459 and N1565 are each glycosylated (N-linked (GlcNAc...) asparagine). Transmembrane regions (helical) follow at residues 1590–1610 (FVVF…MYIV), 1623–1643 (VPIT…VIFI), and 1650–1670 (MVGW…GLPL). N-linked (GlcNAc...) asparagine glycosylation occurs at N1771. The region spanning 1804–1859 (MPSDDALLAEIRDILKTADLMTVTKKGIKQELERRFNVPLDAKRAYINSATEALLS) is the DEK-C domain.

This sequence in the N-terminal section; belongs to the TRAFAC class myosin-kinesin ATPase superfamily. Myosin family. In the C-terminal section; belongs to the chitin synthase family. Class V subfamily.

Its subcellular location is the cell membrane. It carries out the reaction [(1-&gt;4)-N-acetyl-beta-D-glucosaminyl](n) + UDP-N-acetyl-alpha-D-glucosamine = [(1-&gt;4)-N-acetyl-beta-D-glucosaminyl](n+1) + UDP + H(+). Functionally, polymerizes chitin, a structural polymer of the cell wall and septum, by transferring the sugar moiety of UDP-GlcNAc to the non-reducing end of the growing chitin polymer. ChsV and chsVb do perform additive, but not redundant, functions in septum formation. Involved in cell wall integrity and resistance to antimicrobial plant defense compounds such as the tomato phytoanticipin alpha-tomatine or H(2)O(2), and plays a crucial role in vascular colonization and pathogenicity. Also plays an important role in nuclear sorting or distribution. The chain is Chitin synthase V from Fusarium oxysporum f. sp. lycopersici (strain 4287 / CBS 123668 / FGSC 9935 / NRRL 34936) (Fusarium vascular wilt of tomato).